A 354-amino-acid polypeptide reads, in one-letter code: Acyl-CoA-binding domain-containing protein 2 (354 aa).

The chain crosses the membrane as a helical; Signal-anchor span at residues 11-31 (VILGLIFSYLLAKLISIVVTF). Residues 75-96 (AEQGSSRSDSVAGDDSEEDDDW) form a disordered region. A compositionally biased stretch (acidic residues) spans 86 to 96 (AGDDSEEDDDW). The ACB domain maps to 104 to 194 (LDEAFSAATL…VTQLYPTWLD (91 aa)). Residues 136–140 (YGLYK), lysine 162, and tyrosine 181 each bind an acyl-CoA. ANK repeat units lie at residues 265-294 (EGRT…DVNA) and 298-327 (EGQT…NTAA).

Belongs to the ACBP family. As to quaternary structure, interacts (via ankyrin repeats) with HIPP26 and the ethylene-responsive element-binding proteins RAP2-3/EBP and RAP2-12. Interacts with CSE. As to expression, mostly expressed in roots and flowers, and, to a lower extent, in stems, pods and leaves (at protein level).

It is found in the cell membrane. It localises to the endoplasmic reticulum membrane. The protein localises to the peroxisome membrane. Its function is as follows. Binds medium- and long-chain acyl-CoA esters with very high affinity. Can interact in vitro with palmitoyl-CoA, but not with oleoyl-CoA. Binds to lead ions (Pb). May function as an intracellular carrier of acyl-CoA esters. Required for proper phospholipid and, to a lower extent, galactolipid composition. The polypeptide is Acyl-CoA-binding domain-containing protein 2 (ACBP2) (Arabidopsis thaliana (Mouse-ear cress)).